Reading from the N-terminus, the 153-residue chain is Aspartate carbamoyltransferase regulatory chain (153 aa).

Positions 109, 114, 138, and 141 each coordinate Zn(2+).

This sequence belongs to the PyrI family. As to quaternary structure, contains catalytic and regulatory chains. Zn(2+) serves as cofactor.

Its function is as follows. Involved in allosteric regulation of aspartate carbamoyltransferase. The polypeptide is Aspartate carbamoyltransferase regulatory chain (Vibrio vulnificus (strain YJ016)).